We begin with the raw amino-acid sequence, 870 residues long: DNA mismatch repair protein MutS (870 aa).

617-624 lines the ATP pocket; that stretch reads GPNMAGKS.

It belongs to the DNA mismatch repair MutS family.

In terms of biological role, this protein is involved in the repair of mismatches in DNA. It is possible that it carries out the mismatch recognition step. This protein has a weak ATPase activity. The sequence is that of DNA mismatch repair protein MutS from Phocaeicola vulgatus (strain ATCC 8482 / DSM 1447 / JCM 5826 / CCUG 4940 / NBRC 14291 / NCTC 11154) (Bacteroides vulgatus).